Consider the following 393-residue polypeptide: Outer membrane protein assembly factor BamB (393 aa).

Positions 1 to 19 are cleaved as a signal peptide; sequence MQLRKTLLVGLVSVALLSG. Cys-20 carries N-palmitoyl cysteine lipidation. Cys-20 is lipidated: S-diacylglycerol cysteine.

Belongs to the BamB family. As to quaternary structure, part of the Bam complex, which is composed of the outer membrane protein BamA, and four lipoproteins BamB, BamC, BamD and BamE.

It is found in the cell outer membrane. Functionally, part of the outer membrane protein assembly complex, which is involved in assembly and insertion of beta-barrel proteins into the outer membrane. This is Outer membrane protein assembly factor BamB from Yersinia pestis.